The following is a 305-amino-acid chain: UDP-3-O-acyl-N-acetylglucosamine deacetylase (305 aa).

Residues His79, His238, and Asp242 each coordinate Zn(2+). The active-site Proton donor is His265.

The protein belongs to the LpxC family. Zn(2+) serves as cofactor.

It catalyses the reaction a UDP-3-O-[(3R)-3-hydroxyacyl]-N-acetyl-alpha-D-glucosamine + H2O = a UDP-3-O-[(3R)-3-hydroxyacyl]-alpha-D-glucosamine + acetate. The protein operates within glycolipid biosynthesis; lipid IV(A) biosynthesis; lipid IV(A) from (3R)-3-hydroxytetradecanoyl-[acyl-carrier-protein] and UDP-N-acetyl-alpha-D-glucosamine: step 2/6. Functionally, catalyzes the hydrolysis of UDP-3-O-myristoyl-N-acetylglucosamine to form UDP-3-O-myristoylglucosamine and acetate, the committed step in lipid A biosynthesis. The sequence is that of UDP-3-O-acyl-N-acetylglucosamine deacetylase from Haemophilus influenzae (strain PittEE).